Reading from the N-terminus, the 37-residue chain is Kappa-actitoxin-Bgr1a (37 aa).

The region spanning 2-37 is the ShKT domain; the sequence is CRDWFKETACRHAKSLGNCRTSQKYRANCAKTCELC. 3 disulfide bridges follow: Cys2–Cys37, Cys11–Cys30, and Cys20–Cys34. Residues 25-26 are crucial for binding to potassium channels; that stretch reads KY.

The protein belongs to the sea anemone type 1 potassium channel toxin family. Type 1b subfamily.

Its subcellular location is the secreted. The protein localises to the nematocyst. In terms of biological role, inhibits voltage-dependent potassium channels of the Kv1 family (Kv1.1/KCNA1 (Kd=6 nM), Kv1.2/KCNA2 (Kd=15 nM), Kv1.3/KCNA3 (Kd=10-39 nM), Kv1.6/KCNA6, and KCa3.1/KCNN4 (Kd=172 nM)). The chain is Kappa-actitoxin-Bgr1a from Bunodosoma granuliferum (Red warty sea anemone).